Consider the following 672-residue polypeptide: Spermatid perinuclear RNA-binding protein (672 aa).

The 359-residue stretch at 5–363 folds into the DZF domain; the sequence is RSFANDDRHV…ALKRPFEDGL (359 aa). Disordered stretches follow at residues 52–73 and 349–371; these read TNKG…GENY and GAGS…DPNK. Basic and acidic residues predominate over residues 357–371; the sequence is RPFEDGLGDDKDPNK. The DRBM 1 domain maps to 387–453; sequence DLMNALMRLN…AVKVLQAMGY (67 aa). The segment covering 466-476 has biased composition (basic and acidic residues); it reads SDEKSDNESKN. The interval 466-499 is disordered; that stretch reads SDEKSDNESKNETVSSNSSNNTGNSTTETSSTLE. The segment covering 477 to 497 has biased composition (low complexity); it reads ETVSSNSSNNTGNSTTETSST. Residues 510 to 576 form the DRBM 2 domain; the sequence is SGKNPVMELN…ALAALEKLFS (67 aa). R612 and R617 each carry asymmetric dimethylarginine.

Interacts with EIF2AK2. Associates with microtubules; it is unsure whether such interaction is direct or indirect.

The protein localises to the cytoplasm. In terms of biological role, involved in spermatogenesis and sperm function. Plays a role in regulation of cell growth. Binds to double-stranded DNA and RNA. Binds most efficiently to poly(I:C) RNA than to poly(dI:dC) DNA. Binds also to single-stranded poly(G) RNA. Binds non-specifically to the mRNA PRM1 3'-UTR and adenovirus VA RNA. This chain is Spermatid perinuclear RNA-binding protein (STRBP), found in Pongo abelii (Sumatran orangutan).